Here is a 309-residue protein sequence, read N- to C-terminus: Porphobilinogen deaminase (309 aa).

C242 carries the S-(dipyrrolylmethanemethyl)cysteine modification.

Belongs to the HMBS family. Monomer. Requires dipyrromethane as cofactor.

It catalyses the reaction 4 porphobilinogen + H2O = hydroxymethylbilane + 4 NH4(+). Its pathway is porphyrin-containing compound metabolism; protoporphyrin-IX biosynthesis; coproporphyrinogen-III from 5-aminolevulinate: step 2/4. In terms of biological role, tetrapolymerization of the monopyrrole PBG into the hydroxymethylbilane pre-uroporphyrinogen in several discrete steps. The chain is Porphobilinogen deaminase from Shewanella woodyi (strain ATCC 51908 / MS32).